Reading from the N-terminus, the 235-residue chain is Calcium-activated potassium channel subunit beta-2 (235 aa).

Positions 1–45 (MFIWTSGRTSSSYRHDEKRNIYQKIRDHDLLDKRKTVTALKAGED) are ball and chain. At 1 to 46 (MFIWTSGRTSSSYRHDEKRNIYQKIRDHDLLDKRKTVTALKAGEDR) the chain is on the cytoplasmic side. A helical transmembrane segment spans residues 47 to 67 (AILLGLAMMVCSIMMYFLLGI). The Extracellular segment spans residues 68 to 194 (TLLRSYMQSV…VILTKLYSSN (127 aa)). 3 N-linked (GlcNAc...) asparagine glycosylation sites follow: asparagine 88, asparagine 96, and asparagine 119. Residues 195-215 (VLFHSLFWPTCMMAGGVAIVA) form a helical membrane-spanning segment. Over 216–235 (MVKLTQYLSLLCERIQRINR) the chain is Cytoplasmic.

This sequence belongs to the KCNMB (TC 8.A.14.1) family. KCNMB2 subfamily. In terms of assembly, interacts with KCNMA1 tetramer. There are probably 4 molecules of KCMNB2 per KCNMA1 tetramer. N-glycosylated. Expressed in kidney, heart and brain. Highly expressed in ovary. Expressed at low level in other tissues.

The protein localises to the membrane. In terms of biological role, regulatory subunit of the calcium activated potassium KCNMA1 (maxiK) channel. Modulates the calcium sensitivity and gating kinetics of KCNMA1, thereby contributing to KCNMA1 channel diversity. Acts as a negative regulator that confers rapid and complete inactivation of KCNMA1 channel complex. May participate in KCNMA1 inactivation in chromaffin cells of the adrenal gland or in hippocampal CA1 neurons. This Homo sapiens (Human) protein is Calcium-activated potassium channel subunit beta-2 (KCNMB2).